Here is a 476-residue protein sequence, read N- to C-terminus: mRNA cap guanine-N(7) methyltransferase (476 aa).

A compositionally biased stretch (basic and acidic residues) spans 1-14; that stretch reads MANSAKAEEYEKMS. The segment at 1–146 is disordered; the sequence is MANSAKAEEY…KQKNLEEGHS (146 aa). Over residues 20 to 50 the composition is skewed to polar residues; the sequence is ASVNSETESSFNINENTTASGTGLSEKTSVC. A phosphoserine mark is found at Ser24, Ser28, and Ser29. 2 stretches are compositionally biased toward basic and acidic residues: residues 54-68 and 84-118; these read DIAR…DLVK and LDPE…DKSS. At Ser118 the chain carries Phosphoserine. A Nuclear localization signal motif is present at residues 126–128; the sequence is KRK. Residues 129–145 are compositionally biased toward basic and acidic residues; sequence IALEDVPEKQKNLEEGH. The 309-residue stretch at 167–475 folds into the mRNA cap 0 methyltransferase domain; that stretch reads SRIFYLRNFN…IYLVFAFEKQ (309 aa). 176–177 is a binding site for mRNA; sequence NN. S-adenosyl-L-methionine-binding residues include Lys180, Gly205, Asp227, Asp261, Gln284, and Tyr289.

This sequence belongs to the class I-like SAM-binding methyltransferase superfamily. mRNA cap 0 methyltransferase family. Interacts with importin alpha, leading to stimulate both RNA-binding and methyltransferase activity. Interaction with importin alpha and beta is required for its nuclear localization, importin beta dissociating in response to RanGTP, allowing RNMT-importin alpha to bind RNA substrates. Interacts with elongating form of polymerase II and RNGTT. Interacts with RAMAC, this interaction significantly enhances RNA-binding and cap methyltransferase activity. As to expression, widely expressed.

It is found in the nucleus. It catalyses the reaction a 5'-end (5'-triphosphoguanosine)-ribonucleoside in mRNA + S-adenosyl-L-methionine = a 5'-end (N(7)-methyl 5'-triphosphoguanosine)-ribonucleoside in mRNA + S-adenosyl-L-homocysteine. Methyltransferase activity is activated by RAMAC. Functionally, catalytic subunit of the mRNA-capping methyltransferase RNMT:RAMAC complex that methylates the N7 position of the added guanosine to the 5'-cap structure of mRNAs. Binds RNA containing 5'-terminal GpppC. The protein is mRNA cap guanine-N(7) methyltransferase (RNMT) of Homo sapiens (Human).